The primary structure comprises 252 residues: Serine/threonine phosphatase stp (252 aa).

The interval 1 to 22 (MHAEFRTDRGRIRHHNEDNGGV) is disordered. The region spanning 2-242 (HAEFRTDRGR…DNITVLLVER (241 aa)) is the PPM-type phosphatase domain. Positions 36, 37, 194, and 233 each coordinate Mn(2+).

It belongs to the PP2C family. It depends on Mn(2+) as a cofactor.

It is found in the cytoplasm. The protein localises to the membrane. It catalyses the reaction O-phospho-L-seryl-[protein] + H2O = L-seryl-[protein] + phosphate. The catalysed reaction is O-phospho-L-threonyl-[protein] + H2O = L-threonyl-[protein] + phosphate. Functionally, protein phosphatase that dephosphorylates EF-Tu. This chain is Serine/threonine phosphatase stp (stp), found in Listeria innocua serovar 6a (strain ATCC BAA-680 / CLIP 11262).